A 150-amino-acid chain; its full sequence is MVLCFPLLLLLLVLWGQVCPLHAIPKHLTKARWFEIQHIRPSPLQCNRAMNGINNYTQHCKPQNTFLHDSFQNVAAVCDLLSITCKNGYHNCHQSLKPVNMTDCRLTSGSYPQCRYSTAAQYKLFIIACEPPQKSDPPYNLVPVHLDSIL.

Positions 1-23 (MVLCFPLLLLLLVLWGQVCPLHA) are cleaved as a signal peptide. His38 serves as the catalytic Proton acceptor. Cystine bridges form between Cys46/Cys104, Cys60/Cys114, Cys78/Cys129, and Cys85/Cys92. Residue Asn55 is glycosylated (N-linked (GlcNAc...) asparagine). Residues 61–65 (KPQNT) and Lys86 each bind substrate. A glycan (N-linked (GlcNAc...) asparagine) is linked at Asn100. Arg105 is a substrate binding site. His145 serves as the catalytic Proton donor.

This sequence belongs to the pancreatic ribonuclease family. In terms of assembly, interacts (via N-terminus) with bacterial lipopolysaccharide (LPS).

The protein localises to the secreted. It is found in the lysosome. It localises to the cytoplasmic granule. Its function is as follows. Ribonuclease which shows a preference for the pyrimidines uridine and cytosine. Has potent antibacterial activity against a range of Gram-positive and Gram-negative bacteria, including P.aeruginosa, A.baumanii, M.luteus, S.aureus, E.faecalis, E.faecium, S.saprophyticus and E.coli. Causes loss of bacterial membrane integrity, and also promotes agglutination of Gram-negative bacteria. Probably contributes to urinary tract sterility. Bactericidal activity is independent of RNase activity. The chain is Ribonuclease K6 (RNASE6) from Saimiri sciureus (Common squirrel monkey).